The following is a 120-amino-acid chain: Ribosome-binding factor A (120 aa).

Belongs to the RbfA family. In terms of assembly, monomer. Binds 30S ribosomal subunits, but not 50S ribosomal subunits or 70S ribosomes.

It localises to the cytoplasm. Functionally, one of several proteins that assist in the late maturation steps of the functional core of the 30S ribosomal subunit. Associates with free 30S ribosomal subunits (but not with 30S subunits that are part of 70S ribosomes or polysomes). Required for efficient processing of 16S rRNA. May interact with the 5'-terminal helix region of 16S rRNA. This Verminephrobacter eiseniae (strain EF01-2) protein is Ribosome-binding factor A.